The primary structure comprises 218 residues: MNQLIVRQLGVQPYEEIWHQMQDFTDNRNENTADEIWLVQHPSVFTQGSAGKPEHLLNPTNIPVVQTDRGGQITYHGEGQQVMYVLIDIKRLKAQGKDVSVRDLVTALEQCVVKTLADYGIEGYPKPDAPGVYINGKKICSLGLRIRQGRSFHGLAFNVNMDLTPFRNINPCGYAGLEMTQLKDYIAESEAQCDLVSPKLVAHFYNILGYNAQQIINK.

Residues Glu-30–Ala-212 enclose the BPL/LPL catalytic domain. Residues Arg-69–His-76, Ser-141–Gly-143, and Gly-154–Ala-156 each bind substrate. Catalysis depends on Cys-172, which acts as the Acyl-thioester intermediate.

The protein belongs to the LipB family.

The protein resides in the cytoplasm. The enzyme catalyses octanoyl-[ACP] + L-lysyl-[protein] = N(6)-octanoyl-L-lysyl-[protein] + holo-[ACP] + H(+). The protein operates within protein modification; protein lipoylation via endogenous pathway; protein N(6)-(lipoyl)lysine from octanoyl-[acyl-carrier-protein]: step 1/2. Catalyzes the transfer of endogenously produced octanoic acid from octanoyl-acyl-carrier-protein onto the lipoyl domains of lipoate-dependent enzymes. Lipoyl-ACP can also act as a substrate although octanoyl-ACP is likely to be the physiological substrate. The polypeptide is Octanoyltransferase (Actinobacillus pleuropneumoniae serotype 5b (strain L20)).